The chain runs to 273 residues: Dermonecrotic toxin LspaSicTox-alphaIA2iii (273 aa).

H5 is an active-site residue. The Mg(2+) site is built by E25 and D27. Residue H41 is the Nucleophile of the active site. 2 disulfide bridges follow: C45–C51 and C47–C190. Residue D85 coordinates Mg(2+).

It belongs to the arthropod phospholipase D family. Class II subfamily. The cofactor is Mg(2+). As to expression, expressed by the venom gland.

It is found in the secreted. It catalyses the reaction an N-(acyl)-sphingosylphosphocholine = an N-(acyl)-sphingosyl-1,3-cyclic phosphate + choline. It carries out the reaction an N-(acyl)-sphingosylphosphoethanolamine = an N-(acyl)-sphingosyl-1,3-cyclic phosphate + ethanolamine. The catalysed reaction is a 1-acyl-sn-glycero-3-phosphocholine = a 1-acyl-sn-glycero-2,3-cyclic phosphate + choline. The enzyme catalyses a 1-acyl-sn-glycero-3-phosphoethanolamine = a 1-acyl-sn-glycero-2,3-cyclic phosphate + ethanolamine. In terms of biological role, dermonecrotic toxins cleave the phosphodiester linkage between the phosphate and headgroup of certain phospholipids (sphingolipid and lysolipid substrates), forming an alcohol (often choline) and a cyclic phosphate. This toxin acts on sphingomyelin (SM). It may also act on ceramide phosphoethanolamine (CPE), lysophosphatidylcholine (LPC) and lysophosphatidylethanolamine (LPE), but not on lysophosphatidylserine (LPS), and lysophosphatidylglycerol (LPG). It acts by transphosphatidylation, releasing exclusively cyclic phosphate products as second products. Induces dermonecrosis, hemolysis, increased vascular permeability, edema, inflammatory response, and platelet aggregation. This chain is Dermonecrotic toxin LspaSicTox-alphaIA2iii, found in Loxosceles spadicea (Recluse spider).